Consider the following 813-residue polypeptide: LPS-assembly protein LptD (813 aa).

An N-terminal signal peptide occupies residues 1–22 (MRRALRLLPLPLSIAICLPAMA).

This sequence belongs to the LptD family. As to quaternary structure, component of the lipopolysaccharide transport and assembly complex. Interacts with LptE and LptA.

Its subcellular location is the cell outer membrane. In terms of biological role, together with LptE, is involved in the assembly of lipopolysaccharide (LPS) at the surface of the outer membrane. This chain is LPS-assembly protein LptD, found in Xanthomonas axonopodis pv. citri (strain 306).